A 268-amino-acid chain; its full sequence is Indole-3-glycerol phosphate synthase (268 aa).

This sequence belongs to the TrpC family.

It carries out the reaction 1-(2-carboxyphenylamino)-1-deoxy-D-ribulose 5-phosphate + H(+) = (1S,2R)-1-C-(indol-3-yl)glycerol 3-phosphate + CO2 + H2O. The protein operates within amino-acid biosynthesis; L-tryptophan biosynthesis; L-tryptophan from chorismate: step 4/5. The protein is Indole-3-glycerol phosphate synthase of Parafrankia sp. (strain EAN1pec).